The sequence spans 336 residues: Holliday junction branch migration complex subunit RuvB (336 aa).

The large ATPase domain (RuvB-L) stretch occupies residues 1–182; that stretch reads MKERIVNLET…FGMSFRMQFY (182 aa). ATP-binding positions include Leu-21, Arg-22, Gly-63, Lys-66, Thr-67, Ser-68, 129-131, Arg-172, Tyr-182, and Arg-219; that span reads EDF. Mg(2+) is bound at residue Thr-67. Positions 183–253 are small ATPAse domain (RuvB-S); the sequence is SPSELALIIK…ITLHALNELG (71 aa). The tract at residues 256–336 is head domain (RuvB-H); the sequence is ELGFDEADLA…IPTLKSQSLF (81 aa). DNA contacts are provided by Arg-310 and Arg-315.

It belongs to the RuvB family. Homohexamer. Forms an RuvA(8)-RuvB(12)-Holliday junction (HJ) complex. HJ DNA is sandwiched between 2 RuvA tetramers; dsDNA enters through RuvA and exits via RuvB. An RuvB hexamer assembles on each DNA strand where it exits the tetramer. Each RuvB hexamer is contacted by two RuvA subunits (via domain III) on 2 adjacent RuvB subunits; this complex drives branch migration. In the full resolvosome a probable DNA-RuvA(4)-RuvB(12)-RuvC(2) complex forms which resolves the HJ.

The protein localises to the cytoplasm. The catalysed reaction is ATP + H2O = ADP + phosphate + H(+). The RuvA-RuvB-RuvC complex processes Holliday junction (HJ) DNA during genetic recombination and DNA repair, while the RuvA-RuvB complex plays an important role in the rescue of blocked DNA replication forks via replication fork reversal (RFR). RuvA specifically binds to HJ cruciform DNA, conferring on it an open structure. The RuvB hexamer acts as an ATP-dependent pump, pulling dsDNA into and through the RuvAB complex. RuvB forms 2 homohexamers on either side of HJ DNA bound by 1 or 2 RuvA tetramers; 4 subunits per hexamer contact DNA at a time. Coordinated motions by a converter formed by DNA-disengaged RuvB subunits stimulates ATP hydrolysis and nucleotide exchange. Immobilization of the converter enables RuvB to convert the ATP-contained energy into a lever motion, pulling 2 nucleotides of DNA out of the RuvA tetramer per ATP hydrolyzed, thus driving DNA branch migration. The RuvB motors rotate together with the DNA substrate, which together with the progressing nucleotide cycle form the mechanistic basis for DNA recombination by continuous HJ branch migration. Branch migration allows RuvC to scan DNA until it finds its consensus sequence, where it cleaves and resolves cruciform DNA. The chain is Holliday junction branch migration complex subunit RuvB from Helicobacter acinonychis (strain Sheeba).